Here is a 165-residue protein sequence, read N- to C-terminus: Transcription antitermination protein NusB (165 aa).

It belongs to the NusB family.

Involved in transcription antitermination. Required for transcription of ribosomal RNA (rRNA) genes. Binds specifically to the boxA antiterminator sequence of the ribosomal RNA (rrn) operons. The chain is Transcription antitermination protein NusB from Rhodococcus erythropolis (strain PR4 / NBRC 100887).